Reading from the N-terminus, the 1961-residue chain is MAQQAADKYLYVDKNFINNPLAQADCGAKKLVWVPSTKNGFEPASLKEEVGEEAIVELVENGKKVKVNKDDIQKMNPPKFSKVEDMAELTCLNEASVLHNLKERYYSGLIYTYSGLFCVVINPYKNLPIYSEEIVDMYKGKKRHEMPPHIYAITDTAYRSMMQDREDQSILCTGESGAGKTENTKKVIQYLAHVASSHKSKKDQGELERQLLQANPILEAFGNAKTVKNDNSSRFGKFIRINFDVNGYIVGANIETYLLEKSRAIRQAKEERTFHIFYYLLSGAGEHLKTDLLLEPYNKYRFLSNGHVTIPGQQDKDMFQETMEAMRIMGIPEDEQMGLLRVISGVLQLGNIVFKKERNTDQASMPDNTAAQKVSHLLGINVTDFTRGILTPRIKVGRDYVQKAQTKEQADFAIEALAKATYERMFRWLVLRINKALDKTKRQGASFIGILDIAGFEIFDLNSFEQLCINYTNEKLQQLFNHTMFILEQEEYQREGIEWNFIDFGLDLQPCIDLIEKPAGPPGILALLDEECWFPKATDKSFVEKVVQEQGTHPKFQKPKQLKDKADFCIIHYAGKVDYKADEWLMKNMDPLNDNIATLLHQSSDKFVSELWKDVDRIIGLDQVAGMSETALPGAFKTRKGMFRTVGQLYKEQLAKLMATLRNTNPNFVCCIIPNHEKKAGKLDPHLVLDQLRCNGVLEGIRICRQGFPNRVVFQEFRQRYEILTPNSIPKGFMDGKQACVLMIKALELDSNLYRIGQSKVFFRSGVLAHLEEERDLKITDVIIGFQACCRGYLARKAFAKRQQQLTAMKVLQRNCAAYLRLRNWQWWRLFTKVKPLLNSIRHEDELLAKEAELTKVREKHLAAENRLTEMETMQSQLMAEKLQLQEQLQAKTELCAEAEELRARLTAKKQELEEICHDLEARVEEEEERCQYLQAEKKKMQQNIQELEEQLEEEESARQKLQLEKVTTEAKLKKLEEDQIIMEDQNCKLAKEKKLLEDRVAEFTTDLMEEEEKSKSLAKLKNKHEAMITDLEERLRREEKQRQELEKTRRKLEGDSTDLSDQIAELQAQIAELKMQLAKKEEELQAALARVEEEAAQKNMALKKIRELETQISELQEDLESERACRNKAEKQKRDLGEELEALKTELEDTLDSTAAQQELRSKREQEVSILKKTLEDEAKTHEAQIQEMRQKHSQAVEELAEQLEQTKRVKATLEKAKQTLENERGELANEVKALLQGKGDSEHKRKKVEAQLQELQVKFSEGERVRTELADKVSKLQVELDSVTGLLNQSDSKSSKLTKDFSALESQLQDTQELLQEENRQKLSLSTKLKQMEDEKNSFREQLEEEEEEAKRNLEKQIATLHAQVTDMKKKMEDGVGCLETAEEAKRRLQKDLEGLSQRLEEKVAAYDKLEKTKTRLQQELDDLLVDLDHQRQSVSNLEKKQKKFDQLLAEEKTISAKYAEERDRAEAEAREKETKALSLARALEEAMEQKAELERLNKQFRTEMEDLMSSKDDVGKSVHELEKSNRALEQQVEEMKTQLEELEDELQATEDAKLRLEVNLQAMKAQFERDLQGRDEQSEEKKKQLVRQVREMEAELEDERKQRSIAMAARKKLEMDLKDLEAHIDTANKNREEAIKQLRKLQAQMKDCMRDVDDTRASREEILAQAKENEKKLKSMEAEMIQLQEELAAAERAKRQAQQERDELADEIANSSGKGALALEEKRRLEALIALLEEELEEEQGNTELINDRLKKANLQIDQINTDLNLERSHAQKNENARQQLERQNKELKAKLQEMESAVKSKYKASIAALEAKIAQLEEQLDNETKERQAASKQVRRAEKKLKDVLLQVEDERRNAEQFKDQADKASTRLKQLKRQLEEAEEEAQRANASRRKLQRELEDATETADAMNREVSSLKNKLRRGDMPFVVTRRIVRKGTGDCSDEEVDGKADGADAKATE.

A2 carries the post-translational modification N-acetylalanine. The interval 2 to 838 is mediates interaction with LIMCH1; that stretch reads AQQAADKYLY…RLFTKVKPLL (837 aa). The residue at position 8 (K8) is an N6-acetyllysine. Y11 carries the post-translational modification Phosphotyrosine. In terms of domain architecture, Myosin N-terminal SH3-like spans 27–77; the sequence is GAKKLVWVPSTKNGFEPASLKEEVGEEAIVELVENGKKVKVNKDDIQKMNP. Residues 81–776 enclose the Myosin motor domain; sequence SKVEDMAELT…VLAHLEEERD (696 aa). K102 is subject to N6-acetyllysine. 174 to 181 provides a ligand contact to ATP; the sequence is GESGAGKT. N6-acetyllysine is present on residues K299, K435, and K613. The residue at position 628 (S628) is a Phosphoserine. The actin-binding stretch occupies residues 654–676; sequence LAKLMATLRNTNPNFVCCIIPNH. At Y754 the chain carries Phosphotyrosine. The IQ domain occupies 779–808; that stretch reads ITDVIIGFQACCRGYLARKAFAKRQQQLTA. Residues 841–1927 adopt a coiled-coil conformation; sequence IRHEDELLAK…LKNKLRRGDM (1087 aa). K850 carries the N6-succinyllysine modification. An N6-acetyllysine mark is found at K860, K975, and K1024. The span at 1035-1055 shows a compositional bias: basic and acidic residues; it reads RLRREEKQRQELEKTRRKLEG. A disordered region spans residues 1035–1057; sequence RLRREEKQRQELEKTRRKLEGDS. S1114 is subject to Phosphoserine. N6-acetyllysine occurs at positions 1234 and 1249. The disordered stretch occupies residues 1331-1353; that stretch reads LKQMEDEKNSFREQLEEEEEEAK. A compositionally biased stretch (basic and acidic residues) spans 1332 to 1344; that stretch reads KQMEDEKNSFREQ. K1358, K1393, K1405, K1411, K1460, and K1639 each carry N6-acetyllysine. K1670 is modified (N6-succinyllysine). Residue S1715 is modified to Phosphoserine. Residues K1794, K1803, and K1846 each carry the N6-acetyllysine modification. A disordered region spans residues 1878–1910; the sequence is RQLEEAEEEAQRANASRRKLQRELEDATETADA. R1924 bears the Omega-N-methylarginine mark. Positions 1938–1961 are disordered; it reads KGTGDCSDEEVDGKADGADAKATE. S1944 carries the post-translational modification Phosphoserine. The span at 1949–1961 shows a compositional bias: basic and acidic residues; it reads DGKADGADAKATE.

Belongs to the TRAFAC class myosin-kinesin ATPase superfamily. Myosin family. In terms of assembly, myosin is a hexameric protein that consists of 2 heavy chain subunits (MHC), 2 alkali light chain subunits (MLC) and 2 regulatory light chain subunits (MLC-2). Interacts with RASIP1. Interacts with DDR1. Interacts with PDLIM2. Interacts with SVIL. Interacts with HTRA3. Interacts with Myo7a. Interacts with CFAP95. Interacts with LIMCH1; independently of the integration of MYH9 into the myosin complex. Interacts with RAB3A. Interacts with ZBED4. Interacts with S100A4; this interaction increases cell motility. ISGylated. Post-translationally, ubiquitination.

The protein localises to the cytoplasm. It is found in the cytoskeleton. Its subcellular location is the cell cortex. It localises to the cytoplasmic vesicle. The protein resides in the secretory vesicle. The protein localises to the cortical granule. Cellular myosin that appears to play a role in cytokinesis, cell shape, and specialized functions such as secretion and capping. Required for cortical actin clearance prior to oocyte exocytosis. Promotes cell motility in conjunction with S100A4. During cell spreading, plays an important role in cytoskeleton reorganization, focal contact formation (in the margins but not the central part of spreading cells), and lamellipodial retraction; this function is mechanically antagonized by MYH10. The chain is Myosin-9 (Myh9) from Rattus norvegicus (Rat).